The chain runs to 127 residues: Large ribosomal subunit protein bL20 (127 aa).

This sequence belongs to the bacterial ribosomal protein bL20 family.

Functionally, binds directly to 23S ribosomal RNA and is necessary for the in vitro assembly process of the 50S ribosomal subunit. It is not involved in the protein synthesizing functions of that subunit. This chain is Large ribosomal subunit protein bL20, found in Corynebacterium urealyticum (strain ATCC 43042 / DSM 7109).